A 138-amino-acid chain; its full sequence is Cysteine desulfuration protein SufE (138 aa).

Catalysis depends on cysteine 51, which acts as the Cysteine persulfide intermediate.

It belongs to the SufE family. In terms of assembly, homodimer. Interacts with SufS.

The protein resides in the cytoplasm. It functions in the pathway cofactor biosynthesis; iron-sulfur cluster biosynthesis. Functionally, participates in cysteine desulfuration mediated by SufS. Cysteine desulfuration mobilizes sulfur from L-cysteine to yield L-alanine and constitutes an essential step in sulfur metabolism for biosynthesis of a variety of sulfur-containing biomolecules. Functions as a sulfur acceptor for SufS, by mediating the direct transfer of the sulfur atom from the S-sulfanylcysteine of SufS, an intermediate product of cysteine desulfuration process. The protein is Cysteine desulfuration protein SufE of Escherichia coli O17:K52:H18 (strain UMN026 / ExPEC).